A 185-amino-acid polypeptide reads, in one-letter code: GTP-dependent dephospho-CoA kinase (185 aa).

The GTP site is built by Asp-50, Val-52, Asp-73, Lys-75, and Glu-128.

This sequence belongs to the GTP-dependent DPCK family.

It catalyses the reaction 3'-dephospho-CoA + GTP = GDP + CoA + H(+). The protein operates within cofactor biosynthesis; coenzyme A biosynthesis. Its function is as follows. Catalyzes the GTP-dependent phosphorylation of the 3'-hydroxyl group of dephosphocoenzyme A to form coenzyme A (CoA). In Aeropyrum pernix (strain ATCC 700893 / DSM 11879 / JCM 9820 / NBRC 100138 / K1), this protein is GTP-dependent dephospho-CoA kinase.